We begin with the raw amino-acid sequence, 329 residues long: Apolipoprotein E (329 aa).

An N-terminal signal peptide occupies residues 1–18 (MKVLWAALVVALLAGCWA). 8 tandem repeats follow at residues 92-113 (TLMEETMKEIKAYRAELEEQLG), 114-135 (PMASETQARVAKELQAAQARLR), 136-157 (SDMEDVRTRLSQYRGEVQAMLG), 158-179 (QSTEELRARFASHMRKLRKRVL), 180-201 (RDAEDLQKRLAVYRAGVREGAE), 202-223 (RSVSTIRERLWPLLEQARTRHA), 224-245 (KVDALATQPLRERVNALGQQLR), and 246-267 (GRLEEVGSRARSHLDEVREQME). The 8 X 22 AA approximate tandem repeats stretch occupies residues 92–267 (TLMEETMKEI…HLDEVREQME (176 aa)). Residue Met155 is modified to Methionine sulfoxide. Ser159 carries the phosphoserine modification. Residues 170–180 (HMRKLRKRVLR) form an LDL and other lipoprotein receptors binding region. 174 to 177 (LRKR) serves as a coordination point for heparin. The tract at residues 222–302 (HAKVDALATQ…GWFEPLVEDM (81 aa)) is lipid-binding and lipoprotein association. 241 to 248 (GQQLRGRL) is a binding site for heparin. The tract at residues 278–329 (NQMRQQAEAFQARLKGWFEPLVEDMQRQWAVLVEKVQAAVGTSPTTPPVETK) is homooligomerization. Residues 290–302 (RLKGWFEPLVEDM) form a specificity for association with VLDL region.

Belongs to the apolipoprotein A1/A4/E family. In terms of assembly, homotetramer. May interact with ABCA1; functionally associated with ABCA1 in the biogenesis of HDLs. May interact with APP/A4 amyloid-beta peptide; the interaction is extremely stable in vitro but its physiological significance is unclear. May interact with MAPT. May interact with MAP2. In the cerebrospinal fluid, interacts with secreted SORL1. Interacts with PMEL; this allows the loading of PMEL luminal fragment on ILVs to induce fibril nucleation. APOE exists as multiple glycosylated and sialylated glycoforms within cells and in plasma. The extent of glycosylation and sialylation are tissue and context specific. Post-translationally, glycated in plasma VLDL. In terms of processing, phosphorylated by FAM20C in the extracellular medium.

It localises to the secreted. The protein localises to the extracellular space. The protein resides in the extracellular matrix. Its subcellular location is the extracellular vesicle. It is found in the endosome. It localises to the multivesicular body. In terms of biological role, APOE is an apolipoprotein, a protein associating with lipid particles, that mainly functions in lipoprotein-mediated lipid transport between organs via the plasma and interstitial fluids. APOE is a core component of plasma lipoproteins and is involved in their production, conversion and clearance. Apolipoproteins are amphipathic molecules that interact both with lipids of the lipoprotein particle core and the aqueous environment of the plasma. As such, APOE associates with chylomicrons, chylomicron remnants, very low density lipoproteins (VLDL) and intermediate density lipoproteins (IDL) but shows a preferential binding to high-density lipoproteins (HDL). It also binds a wide range of cellular receptors including the LDL receptor/LDLR, the LDL receptor-related proteins LRP1, LRP2 and LRP8 and the very low-density lipoprotein receptor/VLDLR that mediate the cellular uptake of the APOE-containing lipoprotein particles. Finally, APOE also has a heparin-binding activity and binds heparan-sulfate proteoglycans on the surface of cells, a property that supports the capture and the receptor-mediated uptake of APOE-containing lipoproteins by cells. A main function of APOE is to mediate lipoprotein clearance through the uptake of chylomicrons, VLDLs, and HDLs by hepatocytes. APOE is also involved in the biosynthesis by the liver of VLDLs as well as their uptake by peripheral tissues ensuring the delivery of triglycerides and energy storage in muscle, heart and adipose tissues. By participating in the lipoprotein-mediated distribution of lipids among tissues, APOE plays a critical role in plasma and tissues lipid homeostasis. APOE is also involved in two steps of reverse cholesterol transport, the HDLs-mediated transport of cholesterol from peripheral tissues to the liver, and thereby plays an important role in cholesterol homeostasis. First, it is functionally associated with ABCA1 in the biogenesis of HDLs in tissues. Second, it is enriched in circulating HDLs and mediates their uptake by hepatocytes. APOE also plays an important role in lipid transport in the central nervous system, regulating neuron survival and sprouting. The sequence is that of Apolipoprotein E (APOE) from Eumetopias jubatus (Steller sea lion).